Consider the following 332-residue polypeptide: Malate dehydrogenase, cytoplasmic (332 aa).

Residues 16–17, D43, and G90 contribute to the NAD(+) site; that span reads QI. R99 contacts oxaloacetate. The NAD(+) site is built by Q113 and N132. Oxaloacetate is bound by residues N132, R163, H188, and S243. H188 (proton acceptor) is an active-site residue.

This sequence belongs to the LDH/MDH superfamily. MDH type 2 family. Homodimer.

It is found in the cytoplasm. It carries out the reaction (S)-malate + NAD(+) = oxaloacetate + NADH + H(+). This Medicago sativa (Alfalfa) protein is Malate dehydrogenase, cytoplasmic (CMDH).